Here is a 907-residue protein sequence, read N- to C-terminus: Phosphoenolpyruvate carboxylase (907 aa).

Active-site residues include H138 and K570.

The protein belongs to the PEPCase type 1 family. The cofactor is Mg(2+).

The enzyme catalyses oxaloacetate + phosphate = phosphoenolpyruvate + hydrogencarbonate. Functionally, forms oxaloacetate, a four-carbon dicarboxylic acid source for the tricarboxylic acid cycle. The chain is Phosphoenolpyruvate carboxylase from Streptococcus mutans serotype c (strain ATCC 700610 / UA159).